The primary structure comprises 101 residues: MMISGVEISEKSGSAVFRLKAQPRSSKSAISGAYNGGVKVNLKAAPVDDAANRECCDLFAKVLSVSSSRLTILSGKSSKNKTIKVEGLGAEEVALLLRPYL.

It belongs to the UPF0235 family.

This Chlorobium phaeobacteroides (strain DSM 266 / SMG 266 / 2430) protein is UPF0235 protein Cpha266_2081.